Here is a 229-residue protein sequence, read N- to C-terminus: MRIAGAIKFVVAVALFLLTFYVISQVFEIKSYTNLGNIFVRSAIDTVAHPTTKAPRYRCGISKVCPEKHFAFKIASGAANVVGPKICVDDNILMSGVKNNVGRGINTALVNGKTGALIETTYHDLWGGEVGPFIEFLKKIPDGTIVLMATYDDGATKLNDDARKRISELGSTLINVLAFRDNWVFVGGKGIKTKSPFEQHIKNNKDTNKYEGWPEVVEMEGCIPQKLNE.

Residues methionine 1 to serine 24 form the signal peptide. 2 disulfides stabilise this stretch: cysteine 59–cysteine 87 and cysteine 65–cysteine 222. One can recognise a GG-type lectin domain in the interval lysine 68–lysine 226.

Belongs to the FAM3 family. As to expression, expressed in the retinal ganglion cell layer.

Its subcellular location is the secreted. In terms of biological role, involved in retinal laminar formation. This chain is Protein FAM3C (fam3c), found in Xenopus laevis (African clawed frog).